The sequence spans 310 residues: Porphobilinogen deaminase (310 aa).

At C240 the chain carries S-(dipyrrolylmethanemethyl)cysteine.

The protein belongs to the HMBS family. As to quaternary structure, monomer. Dipyrromethane is required as a cofactor.

The enzyme catalyses 4 porphobilinogen + H2O = hydroxymethylbilane + 4 NH4(+). Its pathway is porphyrin-containing compound metabolism; protoporphyrin-IX biosynthesis; coproporphyrinogen-III from 5-aminolevulinate: step 2/4. Functionally, tetrapolymerization of the monopyrrole PBG into the hydroxymethylbilane pre-uroporphyrinogen in several discrete steps. This is Porphobilinogen deaminase from Desulfosudis oleivorans (strain DSM 6200 / JCM 39069 / Hxd3) (Desulfococcus oleovorans).